We begin with the raw amino-acid sequence, 322 residues long: MARDKIALIGSGQIGGTLAHLVGLKELGDVVMFDIAEGVPQGKALDIAQSSPVDGFDAHYTGANSYEALDNAKVCIVTAGVPRKPGMSRDDLLSINLKVMEQVGAGIKKYAPDAFVICITNPLDAMVWALQKASGLPAKKVVGMAGVLDSARFRYFLADEFNVSVEDVTAFVLGGHGDTMVPLTKYSTVAGIPLPDLVKMGWTSQARIDEIVDRTRNGGAEIVNLLKTGSAYYAPAASAIAMAESYLRDKKRVLPCAAYLNGEFGVKDMYVGVPVVIGSKGVERIVEIELAGKDREAFDKSVAAVQGLVDACKKIAPDLLGR.

NAD(+)-binding positions include 10 to 15 (GSGQIG) and D34. Substrate contacts are provided by R83 and R89. NAD(+) contacts are provided by residues N96 and 119 to 121 (ITN). Substrate-binding residues include N121 and R152. The active-site Proton acceptor is H176.

This sequence belongs to the LDH/MDH superfamily. MDH type 3 family.

It catalyses the reaction (S)-malate + NAD(+) = oxaloacetate + NADH + H(+). Its function is as follows. Catalyzes the reversible oxidation of malate to oxaloacetate. The polypeptide is Malate dehydrogenase (Bradyrhizobium sp. (strain ORS 278)).